Here is a 208-residue protein sequence, read N- to C-terminus: Hemocyanin, units E and F (208 aa).

Residue H1 coordinates Cu cation. Residues 1–74 (HGLPAQCPNA…HDLESVRGNL (74 aa)) are unit E. A disulfide bridge links C7 with C18. A cross-link (2'-(S-cysteinyl)-histidine (Cys-His)) is located at residues 19–21 (CLH). N43 carries N-linked (GlcNAc...) asparagine glycosylation. Residues 75 to 208 (VRKNVDRLSL…GHLSLLSPET (134 aa)) form a unit F region. H113 provides a ligand contact to Cu cation. C119 and C130 are joined by a disulfide. A cross-link (2'-(S-cysteinyl)-histidine (Cys-His)) is located at residues 131–133 (CLH). Cu cation is bound by residues H133 and H142.

The protein belongs to the tyrosinase family. Hemocyanin subfamily. As to quaternary structure, decamers of large identical subunits (390 kDa), each containing 8 globular oxygen-binding functional units. Cu(2+) is required as a cofactor.

Functionally, hemocyanins are copper-containing oxygen carriers occurring freely dissolved in the hemolymph of many mollusks and arthropods. This Sepia officinalis (Common cuttlefish) protein is Hemocyanin, units E and F.